Consider the following 63-residue polypeptide: Large ribosomal subunit protein uL29 (63 aa).

Belongs to the universal ribosomal protein uL29 family.

The protein is Large ribosomal subunit protein uL29 of Shewanella baltica (strain OS223).